Reading from the N-terminus, the 113-residue chain is Large ribosomal subunit protein uL22 (113 aa).

It belongs to the universal ribosomal protein uL22 family. As to quaternary structure, part of the 50S ribosomal subunit.

In terms of biological role, this protein binds specifically to 23S rRNA; its binding is stimulated by other ribosomal proteins, e.g. L4, L17, and L20. It is important during the early stages of 50S assembly. It makes multiple contacts with different domains of the 23S rRNA in the assembled 50S subunit and ribosome. The globular domain of the protein is located near the polypeptide exit tunnel on the outside of the subunit, while an extended beta-hairpin is found that lines the wall of the exit tunnel in the center of the 70S ribosome. The sequence is that of Large ribosomal subunit protein uL22 from Bacillus cytotoxicus (strain DSM 22905 / CIP 110041 / 391-98 / NVH 391-98).